The sequence spans 589 residues: ATP-dependent lipid A-core flippase (589 aa).

The next 5 membrane-spanning stretches (helical) occupy residues 29–49 (LLLV…TGFL), 70–90 (WLPV…YITD), 157–177 (VIGA…TILV), 261–281 (MIGA…ALAG), and 283–303 (LTAG…PGLK). In terms of domain architecture, ABC transmembrane type-1 spans 32-314 (VAALIAALIE…LTNVQNMVQR (283 aa)). The 237-residue stretch at 346–582 (IEFRDVTARY…GGLYSHLHGM (237 aa)) folds into the ABC transporter domain. 380–387 (GRSGSGKS) is a binding site for ATP.

Belongs to the ABC transporter superfamily. Lipid exporter (TC 3.A.1.106) family. Homodimer.

It is found in the cell inner membrane. It catalyses the reaction ATP + H2O + lipid A-core oligosaccharideSide 1 = ADP + phosphate + lipid A-core oligosaccharideSide 2.. In terms of biological role, involved in lipopolysaccharide (LPS) biosynthesis. Translocates lipid A-core from the inner to the outer leaflet of the inner membrane. Transmembrane domains (TMD) form a pore in the inner membrane and the ATP-binding domain (NBD) is responsible for energy generation. This is ATP-dependent lipid A-core flippase from Xanthomonas oryzae pv. oryzae (strain MAFF 311018).